The chain runs to 599 residues: Serine/threonine-protein kinase haspin homolog (599 aa).

Residues 287-599 (PESIVKIGEG…FSDMLMDQIS (313 aa)) form the Protein kinase domain. ATP contacts are provided by residues 293–301 (IGEGTYGEA), Lys-310, 407–412 (EHGGKD), 448–453 (DLHWGN), and 486–488 (DFT). The Proton acceptor role is filled by Asp-448.

It belongs to the protein kinase superfamily. Ser/Thr protein kinase family. Haspin subfamily. In terms of tissue distribution, expressed in meristems and primordia of root tips, lateral roots, shoot apex, leaves and flowers.

Its subcellular location is the cytoplasm. It localises to the perinuclear region. The protein resides in the nucleus. It is found in the chromosome. The protein localises to the cytoskeleton. Its subcellular location is the phragmoplast. It catalyses the reaction L-seryl-[protein] + ATP = O-phospho-L-seryl-[protein] + ADP + H(+). The catalysed reaction is L-threonyl-[protein] + ATP = O-phospho-L-threonyl-[protein] + ADP + H(+). Functionally, threonine-protein kinase that phosphorylates histone H3 in vitro at 'Thr-3' (H3T3ph) and 'Thr-11' (H3T11ph), but not at 'Ser-10' (H3S10ph) or 'Ser-28' (H3S28ph). Plays a role in mitotic cell division during plant growth. Threonine-protein kinase that phosphorylates histone H3 in vitro at 'Thr-3' (H3T3ph), but not at 'Thr-11' (H3T11ph), 'Ser-10' (H3S10ph) or 'Ser-28' (H3S28ph). Involved in histone H3 phosphorylation in mitotic cells. Contributes to organ and plant development, as well as embryonic patterning. This is Serine/threonine-protein kinase haspin homolog from Arabidopsis thaliana (Mouse-ear cress).